A 313-amino-acid chain; its full sequence is Probable cell division protein WhiA (313 aa).

Residues 274–308 constitute a DNA-binding region (H-T-H motif); the sequence is SLKELGELVPGGPISKSGVNHRLRKLNAYADELRA.

It belongs to the WhiA family.

Involved in cell division and chromosome segregation. The sequence is that of Probable cell division protein WhiA from Limosilactobacillus reuteri subsp. reuteri (strain JCM 1112) (Lactobacillus reuteri).